We begin with the raw amino-acid sequence, 334 residues long: Ketol-acid reductoisomerase (NADP(+)) (334 aa).

One can recognise a KARI N-terminal Rossmann domain in the interval 1–181 (MTTVYYDQDV…GATRAGVIET (181 aa)). Residues 25-28 (YGSQ), R48, S52, and 82-85 (DEIQ) contribute to the NADP(+) site. The active site involves H107. G133 lines the NADP(+) pocket. One can recognise a KARI C-terminal knotted domain in the interval 182–327 (TFKEETETDL…RELREMMPFI (146 aa)). Mg(2+) is bound by residues D190, E194, E226, and E230. S251 contacts substrate.

It belongs to the ketol-acid reductoisomerase family. Requires Mg(2+) as cofactor.

It carries out the reaction (2R)-2,3-dihydroxy-3-methylbutanoate + NADP(+) = (2S)-2-acetolactate + NADPH + H(+). The enzyme catalyses (2R,3R)-2,3-dihydroxy-3-methylpentanoate + NADP(+) = (S)-2-ethyl-2-hydroxy-3-oxobutanoate + NADPH + H(+). Its pathway is amino-acid biosynthesis; L-isoleucine biosynthesis; L-isoleucine from 2-oxobutanoate: step 2/4. It participates in amino-acid biosynthesis; L-valine biosynthesis; L-valine from pyruvate: step 2/4. In terms of biological role, involved in the biosynthesis of branched-chain amino acids (BCAA). Catalyzes an alkyl-migration followed by a ketol-acid reduction of (S)-2-acetolactate (S2AL) to yield (R)-2,3-dihydroxy-isovalerate. In the isomerase reaction, S2AL is rearranged via a Mg-dependent methyl migration to produce 3-hydroxy-3-methyl-2-ketobutyrate (HMKB). In the reductase reaction, this 2-ketoacid undergoes a metal-dependent reduction by NADPH to yield (R)-2,3-dihydroxy-isovalerate. The chain is Ketol-acid reductoisomerase (NADP(+)) from Staphylococcus aureus (strain Mu3 / ATCC 700698).